Here is an 80-residue protein sequence, read N- to C-terminus: UPF0248 protein M1425_2629 (80 aa).

This sequence belongs to the UPF0248 family.

This chain is UPF0248 protein M1425_2629, found in Saccharolobus islandicus (strain M.14.25 / Kamchatka #1) (Sulfolobus islandicus).